Reading from the N-terminus, the 165-residue chain is Sorting nexin-12 (165 aa).

Residues 1–20 form a disordered region; the sequence is MSDTAVADTRRLNSKPQDLT. S2 is subject to N-acetylserine. Y23 carries the phosphotyrosine modification. Residues 28–151 enclose the PX domain; it reads NFLEIDIFNP…HMFLQEEAID (124 aa). Residues R71, S73, K96, and R118 each coordinate a 1,2-diacyl-sn-glycero-3-phospho-(1D-myo-inositol-3-phosphate). The residue at position 73 (S73) is a Phosphoserine.

It belongs to the sorting nexin family.

Its subcellular location is the membrane. In terms of biological role, may be involved in several stages of intracellular trafficking. This chain is Sorting nexin-12 (Snx12), found in Mus musculus (Mouse).